We begin with the raw amino-acid sequence, 69 residues long: MAMLWISMFIIMRKYGRSSSSSSSSSSSSSSSSSSSSSSSSSSSSSSSSSSSSSSSSGSSSNSNRVVVV.

Positions Met1–Ser18 are cleaved as a signal peptide. The segment at Arg17–Val69 is disordered. The span at Ser18–Ser61 shows a compositional bias: low complexity.

The protein localises to the secreted. This is an uncharacterized protein from Dictyostelium discoideum (Social amoeba).